The chain runs to 285 residues: Nucleotide-binding protein in ptsN-ptsO intergenic region (285 aa).

8–15 (GRSGSGKS) contributes to the ATP binding site. GTP is bound at residue 60-63 (DARN).

This sequence belongs to the RapZ-like family.

Functionally, displays ATPase and GTPase activities. The chain is Nucleotide-binding protein in ptsN-ptsO intergenic region from Stutzerimonas stutzeri (Pseudomonas stutzeri).